A 484-amino-acid chain; its full sequence is Hemogen (484 aa).

Basic and acidic residues predominate over residues 1 to 25; that stretch reads MDLGKDQSHLKHHQTPDPHQEENHS. Disordered regions lie at residues 1 to 32 and 44 to 91; these read MDLGKDQSHLKHHQTPDPHQEENHSPEVIGTW and KAEV…PQPQ. A necessary for nuclear localization region spans residues 7 to 87; sequence QSHLKHHQTP…RQQNTELKVE (81 aa). A compositionally biased stretch (basic residues) spans 61 to 79; the sequence is KKRKQQRTGKGNRRGRKRQ. S123, S159, S181, S188, and S201 each carry phosphoserine. Position 246 is a phosphothreonine (T246). Disordered regions lie at residues 265–290, 306–369, and 386–471; these read DVPKGYILDTDQNPAEPEEYNETDQG, EPKD…YSPE, and QETS…ILNE. Residues 306 to 320 are compositionally biased toward basic and acidic residues; it reads EPKDLSTKTHQESAE. Residues S349 and S353 each carry the phosphoserine modification. Position 360 is a phosphothreonine (T360). Phosphoserine is present on residues S363 and S367. Composition is skewed to basic and acidic residues over residues 413-428, 438-447, and 454-463; these read YKNKDVPKECFPEPHQ, PKAHQEDAKD, and EMKEKPKEEP.

As to expression, expressed in hematopoietic precursor cells, thyroid and spermatids (at protein level). Expressed in bone marrow, testis, thymus. Expressed in prostate cancer and ovarian cancer. Also expressed in thymus and thyroid tumors, non-Hodgkin lymphoma, various leukemia cell lines, peripheral blood mononuclear cells (PBMCs) and bone marrow mononuclear cells (BMMCs) of patients with leukemia.

It localises to the nucleus. Regulates the proliferation and differentiation of hematopoietic cells. Overexpression block the TPA-induced megakaryocytic differentiation in the K562 cell model. May also prevent cell apoptosis through the activation of the nuclear factor-kappa B (NF-kB). This Homo sapiens (Human) protein is Hemogen (HEMGN).